A 320-amino-acid polypeptide reads, in one-letter code: MKITDISGKIETLVDSLRDMSPTRVRSSFSDEHVSENDDERSSWIALHPSALDMFEQIMRDAEGKQIIMFLDYDGTLSLITEDHDRAYITDEMREVVKEVATYFKTAIISGRSTDKVQSFVKLTGIHYAGSHGMDIKGPTNTDQSNQEEVMFQPASDYLPMIDEVVNVLKEKTKSIPGATVEHNKFCLTVHFRRVDETGWAALAEQVRLVLIDYPKLRLTQGRKVLELRPSIKWDKGKALEFLLNSLGIAESKDVLPVYIGDDRTDEDAFKVLCERGQGFGIIVSKTIKETYASYSLQDPSQVKEFLERLVKWKKQTLGE.

This sequence belongs to the trehalose phosphatase family. A divalent metal cation is required as a cofactor.

The catalysed reaction is alpha,alpha-trehalose 6-phosphate + H2O = alpha,alpha-trehalose + phosphate. It participates in glycan biosynthesis; trehalose biosynthesis. Its function is as follows. Removes the phosphate from trehalose 6-phosphate to produce free trehalose. Trehalose accumulation in plant may improve abiotic stress tolerance. The protein is Probable trehalose-phosphate phosphatase C (TPPC) of Arabidopsis thaliana (Mouse-ear cress).